The chain runs to 195 residues: Interferon tau-2 (195 aa).

A signal peptide spans 1 to 23 (MAFVLSLLMALVLVSYGPGGSLG). 2 disulfide bridges follow: Cys-24–Cys-122 and Cys-52–Cys-162.

It belongs to the alpha/beta interferon family. IFN-alphaII subfamily. In terms of tissue distribution, constitutively and exclusively expressed in the mononuclear cells of the extraembryonic trophectoderm.

The protein resides in the secreted. Paracrine hormone primarily responsible for maternal recognition of pregnancy. Interacts with endometrial receptors, probably type I interferon receptors, and blocks estrogen receptor expression, preventing the estrogen-induced increase in oxytocin receptor expression in the endometrium. This results in the suppression of the pulsatile endometrial release of the luteolytic hormone prostaglandin F2-alpha, hindering the regression of the corpus luteum (luteolysis) and therefore a return to ovarian cyclicity. This, and a possible direct effect of IFN-tau on prostaglandin synthesis, leads in turn to continued ovarian progesterone secretion, which stimulates the secretion by the endometrium of the nutrients required for the growth of the conceptus. In summary, displays particularly high antiviral and antiproliferative potency concurrently with particular weak cytotoxicity, high antiluteolytic activity and immunomodulatory properties. In contrast with other IFNs, IFN-tau is not virally inducible. This Ovis aries (Sheep) protein is Interferon tau-2 (IFNT2).